We begin with the raw amino-acid sequence, 132 residues long: Peptide methionine sulfoxide reductase MsrB (132 aa).

Residues 8–130 (LDSWREELTE…NSASLKLVPR (123 aa)) form the MsrB domain. Residues Cys-47, Cys-50, Cys-96, and Cys-99 each coordinate Zn(2+). Cys-119 acts as the Nucleophile in catalysis.

Belongs to the MsrB Met sulfoxide reductase family. It depends on Zn(2+) as a cofactor.

It carries out the reaction L-methionyl-[protein] + [thioredoxin]-disulfide + H2O = L-methionyl-(R)-S-oxide-[protein] + [thioredoxin]-dithiol. This Pseudomonas paraeruginosa (strain DSM 24068 / PA7) (Pseudomonas aeruginosa (strain PA7)) protein is Peptide methionine sulfoxide reductase MsrB.